The chain runs to 240 residues: UPF0309 protein in nagA 3'region (240 aa).

Residues 31 to 206 (IVKRLVQGGI…CAQIIEILHE (176 aa)) form the SIS domain.

The protein belongs to the UPF0309 family.

This is UPF0309 protein in nagA 3'region from Lysinibacillus sphaericus (Bacillus sphaericus).